A 114-amino-acid chain; its full sequence is Protein yippee-like (114 aa).

One can recognise a Yippee domain in the interval arginine 14–asparagine 111. Residues cysteine 18, cysteine 21, cysteine 74, and cysteine 77 each coordinate Zn(2+).

This sequence belongs to the yippee family.

Its function is as follows. Involved in regulating synaptic transmission in presynaptic neurons. In class IV dendritic arborization neurons (nociceptors), involved in regulating activation of their second-order neurons (SONs) and maintaining synaptic contact between nociceptors and their SONs. The protein is Protein yippee-like of Drosophila melanogaster (Fruit fly).